The primary structure comprises 305 residues: NAD kinase 2 (305 aa).

D78 acts as the Proton acceptor in catalysis. NAD(+)-binding positions include 78–79 (DG), 152–153 (NE), D182, 193–198 (TAYSLS), and N251.

This sequence belongs to the NAD kinase family. The cofactor is a divalent metal cation.

It is found in the cytoplasm. It catalyses the reaction NAD(+) + ATP = ADP + NADP(+) + H(+). Its function is as follows. Involved in the regulation of the intracellular balance of NAD and NADP, and is a key enzyme in the biosynthesis of NADP. Catalyzes specifically the phosphorylation on 2'-hydroxyl of the adenosine moiety of NAD to yield NADP. Functions as a growth repressor under light-activated heterotrophic growth conditions and light and dark cycle conditions in the presence of glucose. NADP(H)/NAD(H) maintenance by slr0400 probably plays a significant role in modulating glycolysis and the TCA cycle to repress the growth rate and maintain the photosynthetic capacity. The protein is NAD kinase 2 of Synechocystis sp. (strain ATCC 27184 / PCC 6803 / Kazusa).